Reading from the N-terminus, the 649-residue chain is ATP-dependent zinc metalloprotease FtsH (649 aa).

Topologically, residues 1-18 (MQCSYPLARQLERSSALN) are cytoplasmic. A helical transmembrane segment spans residues 19–39 (NNLFQKAAIWLVIALVLFTVF). The Periplasmic segment spans residues 40-115 (KQFDKPRAQD…VTGKADDEPN (76 aa)). A helical transmembrane segment spans residues 116-136 (VLVQALYYLGPTLLIIVFWFY). The Cytoplasmic portion of the chain corresponds to 137–649 (MMRQMQGGGK…PATARADETV (513 aa)). An ATP-binding site is contributed by 210–217 (GPPGTGKT). Zn(2+) is bound at residue His-432. The active site involves Glu-433. Residues His-436 and Asp-508 each contribute to the Zn(2+) site. Residues 606–649 (IMAGRPPRPPRGAQGPNSGGNTPPGGSPVAPTNAPATARADETV) form a disordered region. Over residues 616 to 626 (RGAQGPNSGGN) the composition is skewed to low complexity.

The protein in the central section; belongs to the AAA ATPase family. This sequence in the C-terminal section; belongs to the peptidase M41 family. In terms of assembly, homohexamer. Zn(2+) serves as cofactor.

The protein resides in the cell inner membrane. In terms of biological role, acts as a processive, ATP-dependent zinc metallopeptidase for both cytoplasmic and membrane proteins. Plays a role in the quality control of integral membrane proteins. This Cupriavidus metallidurans (strain ATCC 43123 / DSM 2839 / NBRC 102507 / CH34) (Ralstonia metallidurans) protein is ATP-dependent zinc metalloprotease FtsH.